The chain runs to 416 residues: Multifunctional CCA protein (416 aa).

Residues G8 and R11 each coordinate ATP. Residues G8 and R11 each contribute to the CTP site. Mg(2+) is bound by residues E21 and D23. ATP contacts are provided by R91, R137, and R140. CTP is bound by residues R91, R137, and R140. The 102-residue stretch at 228 to 329 (TGIHTLMVLK…LKLFDAVDAW (102 aa)) folds into the HD domain.

This sequence belongs to the tRNA nucleotidyltransferase/poly(A) polymerase family. Bacterial CCA-adding enzyme type 1 subfamily. Monomer. Can also form homodimers and oligomers. It depends on Mg(2+) as a cofactor. Requires Ni(2+) as cofactor.

It catalyses the reaction a tRNA precursor + 2 CTP + ATP = a tRNA with a 3' CCA end + 3 diphosphate. The enzyme catalyses a tRNA with a 3' CCA end + 2 CTP + ATP = a tRNA with a 3' CCACCA end + 3 diphosphate. Functionally, catalyzes the addition and repair of the essential 3'-terminal CCA sequence in tRNAs without using a nucleic acid template. Adds these three nucleotides in the order of C, C, and A to the tRNA nucleotide-73, using CTP and ATP as substrates and producing inorganic pyrophosphate. tRNA 3'-terminal CCA addition is required both for tRNA processing and repair. Also involved in tRNA surveillance by mediating tandem CCA addition to generate a CCACCA at the 3' terminus of unstable tRNAs. While stable tRNAs receive only 3'-terminal CCA, unstable tRNAs are marked with CCACCA and rapidly degraded. The sequence is that of Multifunctional CCA protein from Photorhabdus laumondii subsp. laumondii (strain DSM 15139 / CIP 105565 / TT01) (Photorhabdus luminescens subsp. laumondii).